The primary structure comprises 520 residues: Probable protein phosphatase 2C 39 (520 aa).

In terms of domain architecture, PPM-type phosphatase spans phenylalanine 160 to leucine 507. Mn(2+) is bound by residues aspartate 195, glycine 196, aspartate 435, and aspartate 498.

It belongs to the PP2C family. Mg(2+) is required as a cofactor. It depends on Mn(2+) as a cofactor.

It catalyses the reaction O-phospho-L-seryl-[protein] + H2O = L-seryl-[protein] + phosphate. The catalysed reaction is O-phospho-L-threonyl-[protein] + H2O = L-threonyl-[protein] + phosphate. The polypeptide is Probable protein phosphatase 2C 39 (Oryza sativa subsp. japonica (Rice)).